We begin with the raw amino-acid sequence, 332 residues long: T-cell leukemia homeobox protein 1 (332 aa).

Residues 203 to 262 (KKKPRTSFTRLQICELEKRFHRQKYLASAERAALAKALKMTDAQVKTWFQNRRTKWRRQT) constitute a DNA-binding region (homeobox). K238 carries the N6-acetyllysine modification.

In terms of tissue distribution, expressed in various embryonic tissues, including branchial arches, some component of the nervous system and spleen.

The protein resides in the nucleus. Controls the genesis of the spleen. Binds to the DNA sequence 5'-GGCGGTAAGTGG-3'. This Mus musculus (Mouse) protein is T-cell leukemia homeobox protein 1 (Tlx1).